The following is a 184-amino-acid chain: Peptide deformylase (184 aa).

Fe cation is bound by residues cysteine 98 and histidine 140. Glutamate 141 is a catalytic residue. Histidine 144 lines the Fe cation pocket.

It belongs to the polypeptide deformylase family. Fe(2+) is required as a cofactor.

The catalysed reaction is N-terminal N-formyl-L-methionyl-[peptide] + H2O = N-terminal L-methionyl-[peptide] + formate. Removes the formyl group from the N-terminal Met of newly synthesized proteins. Requires at least a dipeptide for an efficient rate of reaction. N-terminal L-methionine is a prerequisite for activity but the enzyme has broad specificity at other positions. The protein is Peptide deformylase of Bacteroides fragilis (strain ATCC 25285 / DSM 2151 / CCUG 4856 / JCM 11019 / LMG 10263 / NCTC 9343 / Onslow / VPI 2553 / EN-2).